We begin with the raw amino-acid sequence, 297 residues long: SH2 domain-containing protein 6 (297 aa).

2 disordered regions span residues 1–61 (MSCP…FPTR) and 74–93 (MNPQPAKQGPVFGRQGRGTS). Positions 36-45 (PSKPPLPPPQ) are enriched in pro residues. The SH2 domain occupies 187–295 (WYSGNCDRQS…RGLTYLRFPT (109 aa)).

In Mus musculus (Mouse), this protein is SH2 domain-containing protein 6 (Sh2d6).